The primary structure comprises 45 residues: Metallothionein-like protein 1A (45 aa).

Belongs to the metallothionein superfamily. Type 15 family. Expressed in phloem and mesophyll cells of leaves, vascular tissues of cotyledons, sepals and petals. Expressed in anthers. Expressed in root endodermis and at lower levels in cortex of mature region of roots.

In terms of biological role, metallothioneins have a high content of cysteine residues that bind various heavy metals. Functions as a metal chelator of copper (Cu) and zinc (Zn). Plays a role in Cu homeostasis in the roots under elevated Cu concentration. Functions cooperatively with the phytochelatin synthase PCS1 to protect plants from Cu and cadmium (Cd) toxicity. Plays a role in Cu homeostasis, specifically in the remobilization of Cu from senescing leaves. The mobilization of Cu from internal sources is important for seed development. Confers tolerance to Cd and plays a role in Cd and Zn homeostasis. This Arabidopsis thaliana (Mouse-ear cress) protein is Metallothionein-like protein 1A (MT1A).